The following is a 174-amino-acid chain: Large ribosomal subunit protein uL10 (174 aa).

This sequence belongs to the universal ribosomal protein uL10 family. As to quaternary structure, part of the ribosomal stalk of the 50S ribosomal subunit. The N-terminus interacts with L11 and the large rRNA to form the base of the stalk. The C-terminus forms an elongated spine to which L12 dimers bind in a sequential fashion forming a multimeric L10(L12)X complex.

Functionally, forms part of the ribosomal stalk, playing a central role in the interaction of the ribosome with GTP-bound translation factors. This Syntrophus aciditrophicus (strain SB) protein is Large ribosomal subunit protein uL10.